Consider the following 279-residue polypeptide: Thioredoxin domain-containing protein plp1 (279 aa).

Residues 56–70 (RKEDTQDYNEPELHN) are compositionally biased toward basic and acidic residues. The disordered stretch occupies residues 56–75 (RKEDTQDYNEPELHNSNDPT). In terms of domain architecture, Thioredoxin spans 137 to 248 (FLTVENEREV…LEFRLLKSSA (112 aa)). Residues 254–267 (EESSSNKSIYHDEL) show a composition bias toward basic and acidic residues. Residues 254-279 (EESSSNKSIYHDELQNNQSDDSDFFE) are disordered. Phosphoserine occurs at positions 272 and 275.

The protein belongs to the phosducin family.

The protein localises to the cytoplasm. It is found in the nucleus. Inhibits early G-protein signaling events following pheromone stimulation. May help create heterodimerizable beta-tubulin by facilitating the efficient transfer of nascent beta-tubulin polypeptides to the folding apparatus. The sequence is that of Thioredoxin domain-containing protein plp1 (plp1) from Schizosaccharomyces pombe (strain 972 / ATCC 24843) (Fission yeast).